A 106-amino-acid chain; its full sequence is Flagellar transcriptional regulator FlhD (106 aa).

It belongs to the FlhD family. In terms of assembly, homodimer; disulfide-linked. Forms a heterohexamer composed of two FlhC and four FlhD subunits. Each FlhC binds a FlhD dimer, forming a heterotrimer, and a hexamer assembles by dimerization of two heterotrimers.

The protein localises to the cytoplasm. Its function is as follows. Functions in complex with FlhC as a master transcriptional regulator that regulates transcription of several flagellar and non-flagellar operons by binding to their promoter region. Activates expression of class 2 flagellar genes, including fliA, which is a flagellum-specific sigma factor that turns on the class 3 genes. Also regulates genes whose products function in a variety of physiological pathways. This is Flagellar transcriptional regulator FlhD from Burkholderia mallei (strain SAVP1).